Reading from the N-terminus, the 69-residue chain is MAFLKKSLFLVLFLGMVSLSICEEEKRENEDEEKQEDDEQSEMKRGLWSTIKNVAAAAGKAALGALGEQ.

The first 22 residues, 1 to 22, serve as a signal peptide directing secretion; that stretch reads MAFLKKSLFLVLFLGMVSLSIC. Residues 23–43 constitute a propeptide that is removed on maturation; it reads EEEKRENEDEEKQEDDEQSEM. Residues 24–44 are disordered; it reads EEKRENEDEEKQEDDEQSEMK. Residues 30–40 are compositionally biased toward acidic residues; it reads EDEEKQEDDEQ. A Leucine amide modification is found at leucine 66. The propeptide occupies 68–69; it reads EQ.

It belongs to the frog skin active peptide (FSAP) family. Dermaseptin subfamily. In terms of tissue distribution, expressed by the skin glands.

The protein resides in the secreted. Possesses a potent antimicrobial activity against Gram-positive and Gram-negative bacteria. Probably acts by disturbing membrane functions with its amphipathic structure. This Pithecopus azureus (Orange-legged monkey tree frog) protein is Dermaseptin-H3.